We begin with the raw amino-acid sequence, 203 residues long: Flagellar transcriptional regulator FlhC (203 aa).

The Zn(2+) site is built by Cys-161, Cys-164, Cys-181, and Cys-184.

The protein belongs to the FlhC family. In terms of assembly, heterohexamer composed of two FlhC and four FlhD subunits. Each FlhC binds a FlhD dimer, forming a heterotrimer, and a hexamer assembles by dimerization of two heterotrimers. Zn(2+) is required as a cofactor.

It localises to the cytoplasm. Its function is as follows. Functions in complex with FlhD as a master transcriptional regulator that regulates transcription of several flagellar and non-flagellar operons by binding to their promoter region. Activates expression of class 2 flagellar genes, including fliA, which is a flagellum-specific sigma factor that turns on the class 3 genes. Also regulates genes whose products function in a variety of physiological pathways. The chain is Flagellar transcriptional regulator FlhC from Cupriavidus necator (strain ATCC 17699 / DSM 428 / KCTC 22496 / NCIMB 10442 / H16 / Stanier 337) (Ralstonia eutropha).